Consider the following 468-residue polypeptide: Cytochrome bd ubiquinol oxidase subunit 1 (468 aa).

Transmembrane regions (helical) follow at residues 15-35 (TLFHFLFVPMSIGLVFMVALM), 51-71 (AKFWGHLFLINFAVGVVTGIL), 95-115 (LAIEALLAFFMESIFIGLWIF), 124-144 (IHALCIWLVSFGTIMSSFWIL), 177-197 (LWVEFPHVIFGALATGAFFIA), 219-239 (LAMIVGLCAGLGVGLSGHMQA), 331-351 (FRIMVGAGVVMILAALGGLWL), 366-386 (IMIALISFPFLANSAGWIMTE), and 416-436 (SIIAFGVMYMILGALLVFLFI). A heme b-binding site is contributed by His18. Heme b is bound at residue His183. Met334 lines the heme b pocket. Residues 448–468 (HHDVPVSTDPFSQEVYHGISS) are disordered.

This sequence belongs to the cytochrome ubiquinol oxidase subunit 1 family. Heterodimer of subunits I and II. The cofactor is heme b. Heme d cis-diol is required as a cofactor.

Its subcellular location is the cell membrane. The catalysed reaction is 2 a ubiquinol + O2(in) + 4 H(+)(in) = 2 a ubiquinone + 2 H2O(in) + 4 H(+)(out). The polypeptide is Cytochrome bd ubiquinol oxidase subunit 1 (cydA) (Bacillus subtilis (strain 168)).